Consider the following 179-residue polypeptide: MENFNQIFTVLAASEGIGLNLDILETGLLNILALVAILVYTGKDFLGSILQERKSTIVKSVQDAEDRLNEANRRLSEAQKQLSQAHVVISEIRNETKTAKTNLLKSDATTAKKELTTRFNRAISSFRSKERVIFLDVKQQIISLVLKRSAIQAKETFGSKKRARALINETIQKLEGDLL.

The chain crosses the membrane as a helical span at residues 28 to 46 (LLNILALVAILVYTGKDFL).

The protein belongs to the ATPase B chain family. F-type ATPases have 2 components, F(1) - the catalytic core - and F(0) - the membrane proton channel. F(1) has five subunits: alpha(3), beta(3), gamma(1), delta(1), epsilon(1). F(0) has four main subunits: a(1), b(1), b'(1) and c(10-14). The alpha and beta chains form an alternating ring which encloses part of the gamma chain. F(1) is attached to F(0) by a central stalk formed by the gamma and epsilon chains, while a peripheral stalk is formed by the delta, b and b' chains.

It is found in the plastid. The protein localises to the chloroplast thylakoid membrane. F(1)F(0) ATP synthase produces ATP from ADP in the presence of a proton or sodium gradient. F-type ATPases consist of two structural domains, F(1) containing the extramembraneous catalytic core and F(0) containing the membrane proton channel, linked together by a central stalk and a peripheral stalk. During catalysis, ATP synthesis in the catalytic domain of F(1) is coupled via a rotary mechanism of the central stalk subunits to proton translocation. Its function is as follows. Component of the F(0) channel, it forms part of the peripheral stalk, linking F(1) to F(0). This Thalassiosira pseudonana (Marine diatom) protein is ATP synthase subunit b, chloroplastic.